Reading from the N-terminus, the 422-residue chain is Histidine--tRNA ligase (422 aa).

This sequence belongs to the class-II aminoacyl-tRNA synthetase family. As to quaternary structure, homodimer.

The protein resides in the cytoplasm. The catalysed reaction is tRNA(His) + L-histidine + ATP = L-histidyl-tRNA(His) + AMP + diphosphate + H(+). The chain is Histidine--tRNA ligase from Vibrio cholerae serotype O1 (strain ATCC 39541 / Classical Ogawa 395 / O395).